A 716-amino-acid polypeptide reads, in one-letter code: Polyribonucleotide nucleotidyltransferase (716 aa).

Mg(2+)-binding residues include Asp493 and Asp499. Residues Pro560–Ile619 enclose the KH domain. The region spanning Gly629–Lys697 is the S1 motif domain.

It belongs to the polyribonucleotide nucleotidyltransferase family. Mg(2+) serves as cofactor.

The protein localises to the cytoplasm. The catalysed reaction is RNA(n+1) + phosphate = RNA(n) + a ribonucleoside 5'-diphosphate. Functionally, involved in mRNA degradation. Catalyzes the phosphorolysis of single-stranded polyribonucleotides processively in the 3'- to 5'-direction. This is Polyribonucleotide nucleotidyltransferase from Paraburkholderia xenovorans (strain LB400).